The primary structure comprises 787 residues: Integrin beta-3 (787 aa).

Residues 1-25 form the signal peptide; that stretch reads MRAQWPGQLWAALLALGALAGVVVG. Topologically, residues 26-717 are extracellular; the sequence is ESNICTTRGV…EEPECPKGPD (692 aa). The region spanning 29-75 is the PSI domain; that stretch reads ICTTRGVNSCQQCLAVSPVCAWCSDETLSQGSPRCNLKENLLKDNCA. 19 disulfides stabilise this stretch: Cys-30-Cys-48, Cys-38-Cys-460, Cys-41-Cys-63, Cys-51-Cys-74, Cys-202-Cys-209, Cys-257-Cys-298, Cys-399-Cys-411, Cys-431-Cys-458, Cys-462-Cys-482, Cys-473-Cys-485, Cys-487-Cys-496, Cys-498-Cys-528, Cys-511-Cys-526, Cys-520-Cys-531, Cys-533-Cys-546, Cys-548-Cys-569, Cys-553-Cys-567, Cys-561-Cys-572, and Cys-574-Cys-583. The VWFA domain occupies 134–376; it reads DYPVDIYYLM…QLIVDAYGKI (243 aa). Mg(2+)-binding residues include Ser-146 and Ser-148. Residues Ser-148, Asp-151, Asp-152, and Asp-183 each coordinate Ca(2+). The tract at residues 202–209 is CX3CL1-binding; it reads CYNMKNAC. The segment at 202-209 is involved in CX3CL1-, NRG1-, FGF1- and IGF1-binding; the sequence is CYNMKNAC. The Ca(2+) site is built by Asn-240, Asp-242, Pro-244, Glu-245, and Asp-276. Position 245 (Glu-245) interacts with Mg(2+). Residues 292–312 are CX3CL1-binding; sequence LPNDGHCHIGTDNHYSASTTM. Asn-345 and Asn-396 each carry an N-linked (GlcNAc...) asparagine glycan. I-EGF domains follow at residues 462–497, 498–547, 548–584, and 585–624; these read CQAFAQPSSPRCNNGNGTFECGVCRCDQGWLGSMCE, CSEE…KYCE, CDDFSCVRYKGEMCSGHGQCNCGDCVCDSDWTGYYCN, and CTTRTDTCMSTNGLLCSGRGNCECGSCVCVQPGSYGDTCE. Asn-477 carries N-linked (GlcNAc...) asparagine glycosylation. N-linked (GlcNAc...) asparagine glycosylation occurs at Asn-584. Intrachain disulfides connect Cys-585-Cys-608, Cys-592-Cys-606, Cys-600-Cys-611, Cys-613-Cys-623, Cys-626-Cys-629, Cys-633-Cys-680, Cys-639-Cys-660, Cys-642-Cys-656, and Cys-688-Cys-712. An N-linked (GlcNAc...) asparagine glycan is attached at Asn-679. A helical membrane pass occupies residues 718-740; the sequence is ILVVLLSVMGAILLIGLATLLIW. The Cytoplasmic portion of the chain corresponds to 741–787; that stretch reads KLLITIHDRKEFAKFEEERARAKWDTANNPLYKEATSTFTNITYRGT. Thr-766 carries the phosphothreonine modification. Phosphotyrosine is present on Tyr-772. An LIR motif is present at residues 776-782; the sequence is TSTFTNI. A Phosphothreonine modification is found at Thr-778. At Tyr-784 the chain carries Phosphotyrosine.

This sequence belongs to the integrin beta chain family. In terms of assembly, heterodimer of an alpha and a beta subunit. Beta-3 (ITGB3) associates with either alpha-IIB (ITGA2B) or alpha-V (ITGAV). Interacts with FLNB and COMP. Interacts with PDIA6 following platelet stimulation. Interacts with SYK; upon activation by ITGB3 promotes platelet adhesion. Interacts with MYO10. Interacts with DAB2. Interacts with FERMT2. Integrin ITGAV:ITGB3 interacts with FBLN5 (via N-terminus). Interacts with EMP2; regulates the levels of the heterodimer ITGA5:ITGB3 integrin expression on the plasma membrane. ITGAV:ITGB3 interacts with CCN3. ITGAV:ITGB3 and ITGA2B:ITGB3 interact with SELP (via C-type lectin domain); the interaction mediates cell-cell interaction and adhesion. ITGAV:ITGB3 interacts with AGRA2. ITGAV:ITGB3 is found in a ternary complex with CX3CR1 and CX3CL1. ITGAV:ITGB3 is found in a ternary complex with NRG1 and ERBB3. ITGAV:ITGB3 is found in a ternary complex with FGF1 and FGFR1. ITGAV:ITGB3 interacts with FGF2; it is likely that FGF2 can simultaneously bind ITGAV:ITGB3 and FGF receptors. ITGAV:ITGB3 binds to IL1B. ITGAV:ITGB3 is found in a ternary complex with IGF1 and IGF1R. ITGAV:ITGB3 interacts with IGF2. ITGAV:ITGB3 interacts with FBN1. ITGAV:ITGB3 interacts with CD9, CD81 and CD151 (via second extracellular domain). Interacts (via the allosteric site (site 2)) with CXCL12 in a CXCR4-independent manner. Interacts with MXRA8/DICAM; the interaction inhibits ITGAV:ITGB3 heterodimer formation. ITGAV:ITGB3 interacts with PTN. Forms a complex with PTPRZ1 and PTN that stimulates endothelial cell migration through ITGB3 Tyr-772 phosphorylation. ITGAV:ITGB3 interacts with SLC6A4. Interacts with SLC6A4 (via C-terminus); this interaction regulates SLC6A4 trafficking. ITGA2B:ITGB3 interacts with PPIA/CYPA; the interaction is ROS and PPIase activity-dependent and is increased in the presence of thrombin. Interacts with tensin TNS3; TNS3 also interacts with PEAK1, thus acting as an adapter molecule to bridge the association of PEAK1 with ITGB3. Interacts with TM4SF19. Phosphorylated on tyrosine residues in response to thrombin-induced platelet aggregation. Probably involved in outside-in signaling.

The protein localises to the cell membrane. It localises to the cell projection. Its subcellular location is the lamellipodium membrane. It is found in the cell junction. The protein resides in the focal adhesion. The protein localises to the postsynaptic cell membrane. It localises to the synapse. Its function is as follows. Integrin alpha-V/beta-3 (ITGAV:ITGB3) is a receptor for cytotactin, fibronectin, laminin, matrix metalloproteinase-2, osteopontin, osteomodulin, prothrombin, thrombospondin, vitronectin and von Willebrand factor. Integrin alpha-IIB/beta-3 (ITGA2B:ITGB3) is a receptor for fibronectin, fibrinogen, plasminogen, prothrombin, thrombospondin and vitronectin. Integrins alpha-IIB/beta-3 and alpha-V/beta-3 recognize the sequence R-G-D in a wide array of ligands. Integrin alpha-IIB/beta-3 recognizes the sequence H-H-L-G-G-G-A-K-Q-A-G-D-V in fibrinogen gamma chain. Following activation integrin alpha-IIB/beta-3 brings about platelet/platelet interaction through binding of soluble fibrinogen. This step leads to rapid platelet aggregation which physically plugs ruptured endothelial surfaces. Fibrinogen binding enhances SELP expression in activated platelets. ITGAV:ITGB3 binds to fractalkine (CX3CL1) and acts as its coreceptor in CX3CR1-dependent fractalkine signaling. ITGAV:ITGB3 binds to NRG1 (via EGF domain) and this binding is essential for NRG1-ERBB signaling. ITGAV:ITGB3 binds to FGF1 and this binding is essential for FGF1 signaling. ITGAV:ITGB3 binds to FGF2 and this binding is essential for FGF2 signaling. ITGAV:ITGB3 binds to IGF1 and this binding is essential for IGF1 signaling. ITGAV:ITGB3 binds to IGF2 and this binding is essential for IGF2 signaling. ITGAV:ITGB3 binds to IL1B and this binding is essential for IL1B signaling. ITGAV:ITGB3 binds to PLA2G2A via a site (site 2) which is distinct from the classical ligand-binding site (site 1) and this induces integrin conformational changes and enhanced ligand binding to site 1. ITGAV:ITGB3 acts as a receptor for fibrillin-1 (FBN1) and mediates R-G-D-dependent cell adhesion to FBN1. ITGAV:ITGB3 binds to the Lilrb4a/Gp49b receptor and enhances the Lilrb4a-mediated inhibition of mast cell activation. ITGAV:ITGB3 also suppresses marginal zone B cell antibody production through its interaction with Lilrb4a. In brain, plays a role in synaptic transmission and plasticity. Involved in the regulation of the serotonin neurotransmission, is required to localize to specific compartments within the synapse the serotonin receptor SLC6A4 and for an appropriate reuptake of serotonin. Controls excitatory synaptic strength by regulating GRIA2-containing AMPAR endocytosis, which affects AMPAR abundance and composition. ITGAV:ITGB3 act as a receptor for CD40LG. ITGAV:ITGB3 acts as a receptor for IBSP and promotes cell adhesion and migration to IBSP. The sequence is that of Integrin beta-3 from Mus musculus (Mouse).